A 432-amino-acid chain; its full sequence is Proline--tRNA ligase (432 aa).

The protein belongs to the class-II aminoacyl-tRNA synthetase family. ProS type 2 subfamily. As to quaternary structure, homodimer.

The protein localises to the cytoplasm. It catalyses the reaction tRNA(Pro) + L-proline + ATP = L-prolyl-tRNA(Pro) + AMP + diphosphate. Functionally, catalyzes the attachment of proline to tRNA(Pro) in a two-step reaction: proline is first activated by ATP to form Pro-AMP and then transferred to the acceptor end of tRNA(Pro). This Rickettsia prowazekii (strain Madrid E) protein is Proline--tRNA ligase.